A 448-amino-acid polypeptide reads, in one-letter code: tRNA-2-methylthio-N(6)-dimethylallyladenosine synthase (448 aa).

The 118-residue stretch at Lys2–Glu119 folds into the MTTase N-terminal domain. [4Fe-4S] cluster contacts are provided by Cys11, Cys48, Cys82, Cys156, Cys160, and Cys163. In terms of domain architecture, Radical SAM core spans Arg142–Ser377. A TRAM domain is found at Gln378–Glu444.

The protein belongs to the methylthiotransferase family. MiaB subfamily. As to quaternary structure, monomer. Requires [4Fe-4S] cluster as cofactor.

It is found in the cytoplasm. The catalysed reaction is N(6)-dimethylallyladenosine(37) in tRNA + (sulfur carrier)-SH + AH2 + 2 S-adenosyl-L-methionine = 2-methylsulfanyl-N(6)-dimethylallyladenosine(37) in tRNA + (sulfur carrier)-H + 5'-deoxyadenosine + L-methionine + A + S-adenosyl-L-homocysteine + 2 H(+). In terms of biological role, catalyzes the methylthiolation of N6-(dimethylallyl)adenosine (i(6)A), leading to the formation of 2-methylthio-N6-(dimethylallyl)adenosine (ms(2)i(6)A) at position 37 in tRNAs that read codons beginning with uridine. The sequence is that of tRNA-2-methylthio-N(6)-dimethylallyladenosine synthase from Polynucleobacter necessarius subsp. necessarius (strain STIR1).